A 498-amino-acid chain; its full sequence is Zinc finger protein 79 (498 aa).

The disordered stretch occupies residues 1-23 (MLEEGVLPSPGPALPQEENTGEE). The 72-residue stretch at 38 to 109 (TFFSSVTVAF…EGEDLRSPSP (72 aa)) folds into the KRAB domain. 11 consecutive C2H2-type zinc fingers follow at residues 193–215 (YACN…QKSH), 221–243 (YECS…QRIH), 249–271 (YKCS…QRTH), 277–299 (YRCS…QRIH), 305–327 (YECS…QRTH), 333–355 (YKCS…QRIH), 361–383 (YRCA…QRTH), 389–411 (YKCS…QKTH), 417–439 (YKCN…HIIH), 445–467 (YECN…QRIH), and 473–495 (YECS…QRLH).

The protein belongs to the krueppel C2H2-type zinc-finger protein family.

The protein resides in the nucleus. Functionally, may be involved in transcriptional regulation. The polypeptide is Zinc finger protein 79 (ZNF79) (Homo sapiens (Human)).